The sequence spans 216 residues: Probable GTP-binding protein EngB (216 aa).

The 178-residue stretch at 37-214 folds into the EngB-type G domain; that stretch reads QGLEVAFAGR…RAAIIKLVAE (178 aa). Residues 45–52, 72–76, 92–95, 159–162, and 193–195 each bind GTP; these read GRSNVGKS, GRTQE, DMPG, TKAD, and TSS. Mg(2+) contacts are provided by Ser52 and Thr74.

Belongs to the TRAFAC class TrmE-Era-EngA-EngB-Septin-like GTPase superfamily. EngB GTPase family. Requires Mg(2+) as cofactor.

Necessary for normal cell division and for the maintenance of normal septation. In Rhodopseudomonas palustris (strain BisA53), this protein is Probable GTP-binding protein EngB.